A 163-amino-acid chain; its full sequence is CASP-like protein 1C2 (163 aa).

The Cytoplasmic portion of the chain corresponds to 1 to 6 (MAKSNK). Residues 7–27 (IFTNTLRLLALAATVVAIVFM) traverse the membrane as a helical segment. At 28–52 (VTSHDSAQVLNLTFTAKYSNTPAFK) the chain is on the extracellular side. A glycan (N-linked (GlcNAc...) asparagine) is linked at asparagine 38. The helical transmembrane segment at 53-73 (FLVIGEAIAGGYTVISILLSF) threads the bilayer. The Cytoplasmic portion of the chain corresponds to 74–79 (KGLFWR). Residues 80-100 (LIVILDMVTTVLLTSSISAAL) traverse the membrane as a helical segment. Residues 101–128 (AIAQVGKKGNTHAGWLPICGQVPDFCDY) are Extracellular-facing. The helical transmembrane segment at 129–149 (VTIALIAGFAAAIIYFVLLLC) threads the bilayer. The Cytoplasmic portion of the chain corresponds to 150-163 (SLYVVLSPIFVATP).

The protein belongs to the Casparian strip membrane proteins (CASP) family. As to quaternary structure, homodimer and heterodimers.

Its subcellular location is the cell membrane. This chain is CASP-like protein 1C2, found in Populus trichocarpa (Western balsam poplar).